A 183-amino-acid polypeptide reads, in one-letter code: Apo-citrate lyase phosphoribosyl-dephospho-CoA transferase (183 aa).

It belongs to the CitX family.

It carries out the reaction apo-[citrate lyase ACP] + 2'-(5''-triphospho-alpha-D-ribosyl)-3'-dephospho-CoA = holo-[citrate lyase ACP] + diphosphate. In terms of biological role, transfers 2-(5''-triphosphoribosyl)-3'-dephosphocoenzyme-A on a serine residue to the apo-acyl carrier protein (gamma chain) of the citrate lyase to yield holo-acyl carrier protein. The polypeptide is Apo-citrate lyase phosphoribosyl-dephospho-CoA transferase (Escherichia coli (strain SMS-3-5 / SECEC)).